A 299-amino-acid polypeptide reads, in one-letter code: 4-hydroxybenzoate octaprenyltransferase (299 aa).

A run of 7 helical transmembrane segments spans residues 31–51, 54–74, 105–125, 148–168, 177–197, 241–261, and 277–297; these read IGIY…ADGL, WDVL…GCVI, VLFF…TNPL, QLPQ…AFAA, IWVL…FYAM, FGLG…FAYQ, and FLHN…DKLI.

It belongs to the UbiA prenyltransferase family. It depends on Mg(2+) as a cofactor.

The protein localises to the cell inner membrane. The enzyme catalyses all-trans-octaprenyl diphosphate + 4-hydroxybenzoate = 4-hydroxy-3-(all-trans-octaprenyl)benzoate + diphosphate. Its pathway is cofactor biosynthesis; ubiquinone biosynthesis. Catalyzes the prenylation of para-hydroxybenzoate (PHB) with an all-trans polyprenyl group. Mediates the second step in the final reaction sequence of ubiquinone-8 (UQ-8) biosynthesis, which is the condensation of the polyisoprenoid side chain with PHB, generating the first membrane-bound Q intermediate 3-octaprenyl-4-hydroxybenzoate. The protein is 4-hydroxybenzoate octaprenyltransferase of Saccharophagus degradans (strain 2-40 / ATCC 43961 / DSM 17024).